The sequence spans 451 residues: Glyceraldehyde-3-phosphate dehydrogenase B, chloroplastic (451 aa).

The transit peptide at 1-83 directs the protein to the chloroplast; it reads MASHAALAPS…AAPVRGETVA (83 aa). Residues 94–95, Asp-118, and Arg-163 each bind NADP(+); that span reads RI. Residues 237 to 239, Thr-268, Arg-283, 296 to 297, and Arg-319 contribute to the D-glyceraldehyde 3-phosphate site; these read SCT and TG. Cys-238 (nucleophile) is an active-site residue. Asn-402 lines the NADP(+) pocket.

It belongs to the glyceraldehyde-3-phosphate dehydrogenase family. Tetramer of either four A chains (GAPDH 2) or two A and two B chains (GAPDH 1).

It is found in the plastid. Its subcellular location is the chloroplast. It carries out the reaction D-glyceraldehyde 3-phosphate + phosphate + NADP(+) = (2R)-3-phospho-glyceroyl phosphate + NADPH + H(+). It participates in carbohydrate biosynthesis; Calvin cycle. The protein is Glyceraldehyde-3-phosphate dehydrogenase B, chloroplastic (GAPB) of Spinacia oleracea (Spinach).